Reading from the N-terminus, the 119-residue chain is Ribonuclease P protein component (119 aa).

Belongs to the RnpA family. Consists of a catalytic RNA component (M1 or rnpB) and a protein subunit.

The catalysed reaction is Endonucleolytic cleavage of RNA, removing 5'-extranucleotides from tRNA precursor.. Its function is as follows. RNaseP catalyzes the removal of the 5'-leader sequence from pre-tRNA to produce the mature 5'-terminus. It can also cleave other RNA substrates such as 4.5S RNA. The protein component plays an auxiliary but essential role in vivo by binding to the 5'-leader sequence and broadening the substrate specificity of the ribozyme. The polypeptide is Ribonuclease P protein component (Listeria monocytogenes serotype 4a (strain HCC23)).